Consider the following 353-residue polypeptide: Quinolinate synthase (353 aa).

Residues His-47 and Ser-68 each coordinate iminosuccinate. Cys-113 is a [4Fe-4S] cluster binding site. Iminosuccinate-binding positions include 139 to 141 (YAN) and Ser-156. [4Fe-4S] cluster is bound at residue Cys-200. Residues 226 to 228 (HPE) and Thr-243 each bind iminosuccinate. A [4Fe-4S] cluster-binding site is contributed by Cys-297.

Belongs to the quinolinate synthase family. Type 1 subfamily. Requires [4Fe-4S] cluster as cofactor.

The protein localises to the cytoplasm. The catalysed reaction is iminosuccinate + dihydroxyacetone phosphate = quinolinate + phosphate + 2 H2O + H(+). It participates in cofactor biosynthesis; NAD(+) biosynthesis; quinolinate from iminoaspartate: step 1/1. Catalyzes the condensation of iminoaspartate with dihydroxyacetone phosphate to form quinolinate. The chain is Quinolinate synthase from Yersinia pseudotuberculosis serotype O:3 (strain YPIII).